We begin with the raw amino-acid sequence, 394 residues long: MTLDVPVNQGHVPPGSVACCLVGVTAVADGIAGHSLSNFGALPPEINSGRMYSGPGSGPLMAAAAAWDGLAAELSSAATGYGAAISELTNMRWWSGPASDSMVAAVLPFVGWLSTTATLAEQAAMQARAAAAAFEAAFAMTVPPPAIAANRTLLMTLVDTNWFGQNTPAIATTESQYAEMWAQDAAAMYGYASAAAPATVLTPFAPPPQTTNATGLVGHATAVAALRGQHSWAAAIPWSDIQKYWMMFLGALATAEGFIYDSGGLTLNALQFVGGMLWSTALAEAGAAEAAAGAGGAAGWSAWSQLGAGPVAASATLAAKIGPMSVPPGWSAPPATPQAQTVARSIPGIRSAAEAAETSVLLRGAPTPGRSRAAHMGRRYGRRLTVMADRPNVG.

Belongs to the mycobacterial PPE family.

This is an uncharacterized protein from Mycobacterium tuberculosis (strain CDC 1551 / Oshkosh).